Reading from the N-terminus, the 427-residue chain is Polyprenol-phosphate-mannose-dependent alpha-(1-2)-phosphatidylinositol mannoside mannosyltransferase (427 aa).

A run of 10 helical transmembrane segments spans residues 18-38 (LWCL…WRLF), 101-121 (ASVA…AIVL), 143-163 (WLAV…SSNF), 191-211 (LMLG…LYFL), 218-238 (AALT…VLAW), 279-299 (ERFA…IWAM), 308-328 (PTLA…VSWS), 331-346 (WVWM…LLGW), 351-371 (VALA…PIDL), and 386-406 (LAGM…GLTV).

Belongs to the glycosyltransferase 87 family.

It localises to the cell membrane. Its pathway is phospholipid metabolism; phosphatidylinositol metabolism. Functionally, responsible for the addition of alpha-(1-2) mannose branches to the linear mannan core on the biosynthetic pathway to mature lipoarabinomannan (LAM). This chain is Polyprenol-phosphate-mannose-dependent alpha-(1-2)-phosphatidylinositol mannoside mannosyltransferase, found in Mycobacterium tuberculosis (strain ATCC 25618 / H37Rv).